We begin with the raw amino-acid sequence, 2376 residues long: Cell morphogenesis protein PAG1 (2376 aa).

A disordered region spans residues 1-30 (MASRFTFPPQRDQGIGFTFPPTNKAEGSSN). Residue serine 141 is modified to Phosphoserine. The disordered stretch occupies residues 275–294 (SSSNTTSKYKHNNNTNNLPG). Phosphoserine is present on serine 1144. Phosphothreonine is present on threonine 2264. Phosphoserine occurs at positions 2267 and 2355.

It to S.pombe mor2. Associates with CBK1.

Functionally, seems to play a role in cell morphogenesis. This Saccharomyces cerevisiae (strain ATCC 204508 / S288c) (Baker's yeast) protein is Cell morphogenesis protein PAG1 (TAO3).